The primary structure comprises 1010 residues: Trifunctional purine biosynthetic protein adenosine-3 (1010 aa).

N-acetylalanine is present on alanine 2. Serine 10 carries the post-translational modification Phosphoserine. The ATP-grasp domain occupies 111–318 (KEFMDRHEIP…LYEVMQSTLD (208 aa)). ATP contacts are provided by residues 190–193 (EEFL), glutamate 197, arginine 220, and asparagine 229. Mg(2+) contacts are provided by glutamate 288 and asparagine 290. N6-acetyllysine is present on lysine 350. The AIRS domain stretch occupies residues 434–809 (GLTYKDSGVD…NFPVQQKKAR (376 aa)). Phosphoserine occurs at positions 440 and 467. Threonine 682 carries the phosphothreonine modification. A GART domain region spans residues 810-1010 (VAVLISGTGS…DGKIHWAKEQ (201 aa)). 818 to 820 (GSN) serves as a coordination point for N(1)-(5-phospho-beta-D-ribosyl)glycinamide. (6R)-10-formyltetrahydrofolate is bound by residues arginine 871, 896–899 (MRIL), and asparagine 913. Histidine 915 acts as the Proton donor in catalysis. Residue 947–951 (AEDVD) coordinates (6R)-10-formyltetrahydrofolate. 977–980 (KVAE) contributes to the N(1)-(5-phospho-beta-D-ribosyl)glycinamide binding site.

It in the N-terminal section; belongs to the GARS family. In the central section; belongs to the AIR synthase family. The protein in the C-terminal section; belongs to the GART family. As to quaternary structure, homodimer. Requires Mg(2+) as cofactor. It depends on Mn(2+) as a cofactor. In terms of tissue distribution, detected in liver, kidney and brain.

The catalysed reaction is 5-phospho-beta-D-ribosylamine + glycine + ATP = N(1)-(5-phospho-beta-D-ribosyl)glycinamide + ADP + phosphate + H(+). It carries out the reaction 2-formamido-N(1)-(5-O-phospho-beta-D-ribosyl)acetamidine + ATP = 5-amino-1-(5-phospho-beta-D-ribosyl)imidazole + ADP + phosphate + H(+). It catalyses the reaction N(1)-(5-phospho-beta-D-ribosyl)glycinamide + (6R)-10-formyltetrahydrofolate = N(2)-formyl-N(1)-(5-phospho-beta-D-ribosyl)glycinamide + (6S)-5,6,7,8-tetrahydrofolate + H(+). Its pathway is purine metabolism; IMP biosynthesis via de novo pathway; 5-amino-1-(5-phospho-D-ribosyl)imidazole from N(2)-formyl-N(1)-(5-phospho-D-ribosyl)glycinamide: step 2/2. It participates in purine metabolism; IMP biosynthesis via de novo pathway; N(1)-(5-phospho-D-ribosyl)glycinamide from 5-phospho-alpha-D-ribose 1-diphosphate: step 2/2. It functions in the pathway purine metabolism; IMP biosynthesis via de novo pathway; N(2)-formyl-N(1)-(5-phospho-D-ribosyl)glycinamide from N(1)-(5-phospho-D-ribosyl)glycinamide (10-formyl THF route): step 1/1. Its function is as follows. Trifunctional enzyme that catalyzes three distinct reactions as part of the 'de novo' inosine monophosphate biosynthetic pathway. The sequence is that of Trifunctional purine biosynthetic protein adenosine-3 (Gart) from Mus musculus (Mouse).